A 491-amino-acid chain; its full sequence is Cobyric acid synthase (491 aa).

Positions 253–429 constitute a GATase cobBQ-type domain; the sequence is ARRVAVIRLP…WHGALEGDEL (177 aa). Cys334 serves as the catalytic Nucleophile. His421 is an active-site residue.

This sequence belongs to the CobB/CobQ family. CobQ subfamily.

It functions in the pathway cofactor biosynthesis; adenosylcobalamin biosynthesis. Functionally, catalyzes amidations at positions B, D, E, and G on adenosylcobyrinic A,C-diamide. NH(2) groups are provided by glutamine, and one molecule of ATP is hydrogenolyzed for each amidation. The polypeptide is Cobyric acid synthase (Mycolicibacterium gilvum (strain PYR-GCK) (Mycobacterium gilvum (strain PYR-GCK))).